A 119-amino-acid polypeptide reads, in one-letter code: Type II secretion system protein I (119 aa).

The propeptide at 1–5 (MNARG) is leader sequence. N-methylmethionine is present on Met-6. A helical transmembrane segment spans residues 6–26 (MTLLEVMVALAVFAIAGLAVM).

Belongs to the GSP I family. Type II secretion is composed of four main components: the outer membrane complex, the inner membrane complex, the cytoplasmic secretion ATPase and the periplasm-spanning pseudopilus. Interacts with core component ExeG. Post-translationally, cleaved by prepilin peptidase. In terms of processing, methylated by prepilin peptidase at the amino group of the N-terminal methionine once the leader sequence is cleaved by prepilin peptidase.

It localises to the cell inner membrane. In terms of biological role, component of the type II secretion system required for the energy-dependent secretion of extracellular factors such as proteases and toxins from the periplasm. Part of the pseudopilus tip complex that is critical for the recognition and binding of secretion substrates. The sequence is that of Type II secretion system protein I (exeI) from Aeromonas hydrophila.